The chain runs to 177 residues: Large ribosomal subunit protein uL6 (177 aa).

The disordered stretch occupies residues 151-177 (LRPPEPYKGKGVRYAGENVRRKEGKKK).

Belongs to the universal ribosomal protein uL6 family. Part of the 50S ribosomal subunit.

In terms of biological role, this protein binds to the 23S rRNA, and is important in its secondary structure. It is located near the subunit interface in the base of the L7/L12 stalk, and near the tRNA binding site of the peptidyltransferase center. The polypeptide is Large ribosomal subunit protein uL6 (Phenylobacterium zucineum (strain HLK1)).